Consider the following 327-residue polypeptide: 4-hydroxythreonine-4-phosphate dehydrogenase (327 aa).

Histidine 134 and threonine 135 together coordinate substrate. A divalent metal cation is bound by residues histidine 164, histidine 209, and histidine 264. Residues lysine 272, asparagine 281, and arginine 290 each contribute to the substrate site.

The protein belongs to the PdxA family. As to quaternary structure, homodimer. The cofactor is Zn(2+). Mg(2+) is required as a cofactor. Co(2+) serves as cofactor.

It localises to the cytoplasm. It carries out the reaction 4-(phosphooxy)-L-threonine + NAD(+) = 3-amino-2-oxopropyl phosphate + CO2 + NADH. It functions in the pathway cofactor biosynthesis; pyridoxine 5'-phosphate biosynthesis; pyridoxine 5'-phosphate from D-erythrose 4-phosphate: step 4/5. Catalyzes the NAD(P)-dependent oxidation of 4-(phosphooxy)-L-threonine (HTP) into 2-amino-3-oxo-4-(phosphooxy)butyric acid which spontaneously decarboxylates to form 3-amino-2-oxopropyl phosphate (AHAP). This Shewanella frigidimarina (strain NCIMB 400) protein is 4-hydroxythreonine-4-phosphate dehydrogenase.